A 1132-amino-acid polypeptide reads, in one-letter code: Major DNA-binding protein (1132 aa).

The interval 1103-1132 is required for nuclear localization; sequence VEELFPSPGVPSLTVGKKRKIASLLSDLDL.

Belongs to the herpesviridae major DNA-binding protein family. As to quaternary structure, homooligomers. Forms double-helical filaments necessary for the formation of replication compartments within the host nucleus. Interacts with the origin-binding protein. Interacts with the helicase primase complex; this interaction stimulates primer synthesis activity of the helicase-primase complex. Interacts with the DNA polymerase. Interacts with the alkaline exonuclease; this interaction increases its nuclease processivity.

The protein resides in the host nucleus. Its function is as follows. Plays several crucial roles in viral infection. Participates in the opening of the viral DNA origin to initiate replication by interacting with the origin-binding protein. May disrupt loops, hairpins and other secondary structures present on ssDNA to reduce and eliminate pausing of viral DNA polymerase at specific sites during elongation. Promotes viral DNA recombination by performing strand-transfer, characterized by the ability to transfer a DNA strand from a linear duplex to a complementary single-stranded DNA circle. Can also catalyze the renaturation of complementary single strands. Additionally, reorganizes the host cell nucleus, leading to the formation of prereplicative sites and replication compartments. This process is driven by the protein which can form double-helical filaments in the absence of DNA. This chain is Major DNA-binding protein, found in Human herpesvirus 8 type P (isolate GK18) (HHV-8).